The chain runs to 115 residues: Large ribosomal subunit protein uL22 (115 aa).

It belongs to the universal ribosomal protein uL22 family. In terms of assembly, part of the 50S ribosomal subunit.

In terms of biological role, this protein binds specifically to 23S rRNA; its binding is stimulated by other ribosomal proteins, e.g. L4, L17, and L20. It is important during the early stages of 50S assembly. It makes multiple contacts with different domains of the 23S rRNA in the assembled 50S subunit and ribosome. Its function is as follows. The globular domain of the protein is located near the polypeptide exit tunnel on the outside of the subunit, while an extended beta-hairpin is found that lines the wall of the exit tunnel in the center of the 70S ribosome. The polypeptide is Large ribosomal subunit protein uL22 (Streptomyces griseus subsp. griseus (strain JCM 4626 / CBS 651.72 / NBRC 13350 / KCC S-0626 / ISP 5235)).